Consider the following 222-residue polypeptide: Charged multivesicular body protein 3 (222 aa).

Gly-2 is lipidated: N-myristoyl glycine. Residues 2–113 are intramolecular interaction with C-terminus; sequence GLFGKTQEKP…LQKSTEVMKA (112 aa). Residues 22-54 are a coiled coil; sequence KIRKEMRVVDRQIRDIQREEEKVKRSVKDAAKK. 2 important for autoinhibitory function regions span residues 59–64 and 168–169; these read VCVVLA and IL. Residues 149 to 222 adopt a coiled-coil conformation; it reads ESMDDQEEME…MQSRLATLRS (74 aa). Residues 151–220 are intramolecular interaction with N-terminus; that stretch reads MDDQEEMEEA…EAMQSRLATL (70 aa). The interaction with VPS4A stretch occupies residues 151–222; it reads MDDQEEMEEA…MQSRLATLRS (72 aa). Residue Lys-179 forms a Glycyl lysine isopeptide (Lys-Gly) (interchain with G-Cter in ubiquitin) linkage. Positions 180–222 are disordered; sequence APSKVTDALPEPEPSGAMAASDEEEEEEEALEAMQSRLATLRS. Interaction with STAMBP regions lie at residues 196 to 222, 203 to 207, and 221 to 222; these read AMAASDEEEEEEEALEAMQSRLATLRS, EEEEE, and RS. Phosphoserine is present on Ser-200. The span at 200-210 shows a compositional bias: acidic residues; the sequence is SDEEEEEEEAL. The short motif at 201 to 211 is the MIT-interacting motif element; it reads DEEEEEEEALE.

Belongs to the SNF7 family. Probable core component of the endosomal sorting required for transport complex III (ESCRT-III). ESCRT-III components are thought to multimerize to form a flat lattice on the perimeter membrane of the endosome. Several assembly forms of ESCRT-III may exist that interact and act sequentially. Forms a metastable monomer in solution; its core structure (without part of the putative autoinhibitory C-terminal acidic region) oligomerizes into a flat lattice via two different dimerization interfaces. In vitro, heteromerizes with CHMP2A (but not CHMP4) to form helical tubular structures that expose membrane-interacting sites on the outside whereas VPS4B can associate on the inside of the tubule. May interact with IGFBP7; the relevance of such interaction however remains unclear. Interacts with CHMP2A. Interacts with CHMP4A; the interaction requires the release of CHMP4A autoinhibition. Interacts with VPS4A. Interacts with STAMBP; the interaction appears to relieve the autoinhibition of CHMP3. Interacts with VTA1.

It is found in the cytoplasm. The protein resides in the cytosol. The protein localises to the membrane. It localises to the endosome. Its subcellular location is the late endosome membrane. Functionally, probable core component of the endosomal sorting required for transport complex III (ESCRT-III) which is involved in multivesicular bodies (MVBs) formation and sorting of endosomal cargo proteins into MVBs. MVBs contain intraluminal vesicles (ILVs) that are generated by invagination and scission from the limiting membrane of the endosome and mostly are delivered to lysosomes enabling degradation of membrane proteins, such as stimulated growth factor receptors, lysosomal enzymes and lipids. The MVB pathway appears to require the sequential function of ESCRT-O, -I,-II and -III complexes. ESCRT-III proteins mostly dissociate from the invaginating membrane before the ILV is released. The ESCRT machinery also functions in topologically equivalent membrane fission events, such as the terminal stages of cytokinesis and the budding of enveloped viruses (lentiviruses). ESCRT-III proteins are believed to mediate the necessary vesicle extrusion and/or membrane fission activities, possibly in conjunction with the AAA ATPase VPS4. Selectively binds to phosphatidylinositol 3,5-bisphosphate PtdIns(3,5)P2 and PtdIns(3,4)P2 in preference to other phosphoinositides tested. Involved in late stages of cytokinesis. Plays a role in endosomal sorting/trafficking of EGF receptor. The polypeptide is Charged multivesicular body protein 3 (CHMP3) (Macaca fascicularis (Crab-eating macaque)).